The following is a 117-amino-acid chain: UPF0295 protein Bsph_0336 (117 aa).

Helical transmembrane passes span 13-33 and 37-57; these read SFALALIFIGFIVMYGGIFFK and ILVLIFMTLGVLCIIGSTVVY.

Belongs to the UPF0295 family.

It is found in the cell membrane. In Lysinibacillus sphaericus (strain C3-41), this protein is UPF0295 protein Bsph_0336.